We begin with the raw amino-acid sequence, 401 residues long: Rho-N domain-containing protein 1, chloroplastic (401 aa).

A chloroplast-targeting transit peptide spans 1–63 (MAMSGTFHLT…VPNRSSFVCR (63 aa)). Disordered regions lie at residues 73 to 129 (PDFS…PGPR) and 180 to 361 (KHSG…EEAV). Composition is skewed to polar residues over residues 102–126 (DMLS…TSSP), 210–223 (TGNL…DNNA), and 240–265 (PRSQ…VTWT). Basic and acidic residues predominate over residues 266-290 (QKKDTVELHDEPEHEPAYEHEHEPE). The span at 339-358 (LSDDDESLDDADEDSDEAEE) shows a compositional bias: acidic residues. The stretch at 339-371 (LSDDDESLDDADEDSDEAEEEAVKDLSELKLVE) forms a coiled coil.

Homodimer or homomultimer. Part of a chloroplastic degradosome-like complex. Interacts with RNE.

It localises to the plastid. The protein resides in the chloroplast. Its function is as follows. Binds to and supports processing of specific plastid RNAs. Associates via its C-terminal Rho-N domain to single stranded regions of 16S and 23S rRNAs or to rbcL mRNAs. May be involved in targeting transcripts to RNases such as RNE or RNase J. The sequence is that of Rho-N domain-containing protein 1, chloroplastic (RHON1) from Arabidopsis thaliana (Mouse-ear cress).